The following is a 278-amino-acid chain: MLEIAGKKFDSHLIMGTGGATSQTLLEKALVASGTQLTTVAMRRFRAGNTPSTAGASNGAAGGESVFGLLNRLGIDVLPNTAGCRTAKDAILTAQLAREALGTNWVKLELIADDRTLLPDVVELVDTCEMLVANGFEVLAYTSDDPVVAKRLEDAGAAAVMPLGSPIGTGLGILNPHNIELICARASVPVLLDAGVGTTSDAALAMELGCSGVLLASAVNRCQDPVAMATAMRHAVEAGRLAAAAGRIPKRTHAQGALASSSFEGLASWDEDWAEEVL.

The Schiff-base intermediate with DXP role is filled by K107. 1-deoxy-D-xylulose 5-phosphate contacts are provided by residues G168, 194 to 195, and 216 to 217; these read AG and AS.

Belongs to the ThiG family. Homotetramer. Forms heterodimers with either ThiH or ThiS.

Its subcellular location is the cytoplasm. The enzyme catalyses [ThiS sulfur-carrier protein]-C-terminal-Gly-aminoethanethioate + 2-iminoacetate + 1-deoxy-D-xylulose 5-phosphate = [ThiS sulfur-carrier protein]-C-terminal Gly-Gly + 2-[(2R,5Z)-2-carboxy-4-methylthiazol-5(2H)-ylidene]ethyl phosphate + 2 H2O + H(+). The protein operates within cofactor biosynthesis; thiamine diphosphate biosynthesis. Catalyzes the rearrangement of 1-deoxy-D-xylulose 5-phosphate (DXP) to produce the thiazole phosphate moiety of thiamine. Sulfur is provided by the thiocarboxylate moiety of the carrier protein ThiS. In vitro, sulfur can be provided by H(2)S. This is Thiazole synthase from Corynebacterium jeikeium (strain K411).